Here is a 91-residue protein sequence, read N- to C-terminus: Small ribosomal subunit protein bS16 (91 aa).

This sequence belongs to the bacterial ribosomal protein bS16 family.

This is Small ribosomal subunit protein bS16 from Staphylococcus haemolyticus (strain JCSC1435).